Here is a 421-residue protein sequence, read N- to C-terminus: UDP-N-acetylglucosamine 1-carboxyvinyltransferase (421 aa).

Position 22-23 (22-23 (KN)) interacts with phosphoenolpyruvate. Residue Arg-91 coordinates UDP-N-acetyl-alpha-D-glucosamine. Cys-115 (proton donor) is an active-site residue. The residue at position 115 (Cys-115) is a 2-(S-cysteinyl)pyruvic acid O-phosphothioketal. UDP-N-acetyl-alpha-D-glucosamine-binding positions include 120–124 (RPVDL), 160–163 (KVSV), Asp-305, and Ile-327.

It belongs to the EPSP synthase family. MurA subfamily.

It localises to the cytoplasm. The catalysed reaction is phosphoenolpyruvate + UDP-N-acetyl-alpha-D-glucosamine = UDP-N-acetyl-3-O-(1-carboxyvinyl)-alpha-D-glucosamine + phosphate. It participates in cell wall biogenesis; peptidoglycan biosynthesis. In terms of biological role, cell wall formation. Adds enolpyruvyl to UDP-N-acetylglucosamine. The chain is UDP-N-acetylglucosamine 1-carboxyvinyltransferase from Photorhabdus laumondii subsp. laumondii (strain DSM 15139 / CIP 105565 / TT01) (Photorhabdus luminescens subsp. laumondii).